Reading from the N-terminus, the 198-residue chain is Recombination protein RecR (198 aa).

Residues 57 to 72 (CSICGNLTDEDPCAIC) form a C4-type zinc finger. Positions 80–175 (STILIVEDSR…KVTRLARGLA (96 aa)) constitute a Toprim domain.

Belongs to the RecR family.

Functionally, may play a role in DNA repair. It seems to be involved in an RecBC-independent recombinational process of DNA repair. It may act with RecF and RecO. In Streptococcus gordonii (strain Challis / ATCC 35105 / BCRC 15272 / CH1 / DL1 / V288), this protein is Recombination protein RecR.